A 620-amino-acid chain; its full sequence is MKPAKQTTASLAFLAMGIVYGDIGTSPLYAFKEVFFSHHPLAINPDNVLGILSLVFWAFVLIVSIKYLLLVTRADQNGEGGILTLSAIAQQSAPKPWQRIAMLLGILATGFFFGEAVITPAMSVLSAVEGIAVAQPDLAPYVLPIAMMIIVALFAVQAMGTERIGRFFAPVMLLWFLVLALLGAHAIWHAPQVLRALNPAYAVHFVLLYGQHTLFILGLVVLSVTGVEALYADMGHFGIKPIRIAWFALVMPSLLLNYFGQGAYLLTLSAPTGSTFFSLAPKAWLWPLILLATFATVIASQAVISGIFSLARQAINYGYLPPMKIAHTSEHSQGQIYVPAANMLLFVAVIFVMLRFRSSANLAAAYGIAVTAIMMISSLLLVLVARYQWQWRWPRVVTIGIVFIGMDSLLLASTSTKLMEGGWLPLLLGCVVFIVMYIWQQQRQRLLEIAGNELSVSAMIQSLEEESFQRAAGTAVYLSRSLNHVPRSLLHNIKYNKTLHERNVLMTFQYEAVPRVHPCRRAEIEQVSASFWQVVIHIGYQEEPDMAQVMHCCGLKGLYLHPNETLFLLSSERLKVQKLGMWHDLKVWFFIQMSKHALRTSERLNIPPDRLIEMGVYREM.

12 consecutive transmembrane segments (helical) span residues 11 to 31 (LAFL…LYAF), 51 to 71 (ILSL…LLLV), 100 to 120 (IAML…VITP), 138 to 158 (LAPY…AVQA), 167 to 187 (FFAP…AHAI), 202 to 222 (AVHF…LVVL), 246 to 266 (WFAL…AYLL), 288 to 308 (LILL…SGIF), 334 to 354 (GQIY…FVML), 364 to 384 (AAYG…LVLV), 396 to 416 (VVTI…STST), and 418 to 438 (LMEG…VMYI).

This sequence belongs to the HAK/KUP transporter (TC 2.A.72) family.

It is found in the cell inner membrane. It catalyses the reaction K(+)(in) + H(+)(in) = K(+)(out) + H(+)(out). Functionally, transport of potassium into the cell. Likely operates as a K(+):H(+) symporter. This is Probable potassium transport system protein Kup from Vibrio cholerae serotype O1 (strain ATCC 39315 / El Tor Inaba N16961).